We begin with the raw amino-acid sequence, 353 residues long: Phosphate acyltransferase (353 aa).

This sequence belongs to the PlsX family. In terms of assembly, homodimer. Probably interacts with PlsY.

It is found in the cytoplasm. The enzyme catalyses a fatty acyl-[ACP] + phosphate = an acyl phosphate + holo-[ACP]. It participates in lipid metabolism; phospholipid metabolism. Functionally, catalyzes the reversible formation of acyl-phosphate (acyl-PO(4)) from acyl-[acyl-carrier-protein] (acyl-ACP). This enzyme utilizes acyl-ACP as fatty acyl donor, but not acyl-CoA. In Rhodopseudomonas palustris (strain HaA2), this protein is Phosphate acyltransferase.